The sequence spans 924 residues: Cell division control protein 13 (924 aa).

The segment at 265 to 336 (PTTDISNMGE…KRKRKLSFHS (72 aa)) is disordered. Positions 295–308 (GKYFSSKSYIQSQT) are enriched in polar residues. At Ser-306 the chain carries Phosphoserine. Thr-308 carries the post-translational modification Phosphothreonine. The segment covering 309-326 (PERKTSVPNNWHDDDSGS) has biased composition (basic and acidic residues). Ser-333 carries the phosphoserine modification. The OB DNA-binding region spans 500–686 (KMARKDPTIE…FEEYRRFFPI (187 aa)).

As to quaternary structure, interacts with POL1, EST1, FUN12, STM1, STN1 and TEN1.

It is found in the chromosome. The protein resides in the telomere. Functionally, single-stranded telomeric DNA-binding protein that regulates telomere replication. Has a role in both positive and negative regulation. Promotes [TG(1-3)] strand lengthening via interaction with EST1. Promotes [C(1-3)A] strand re-synthesis by DNA polymerase alpha via interaction with POL1. Negatively regulates telomere elongation of the G strand via binding with STN1 thereby inhibiting telomerase activity. The polypeptide is Cell division control protein 13 (CDC13) (Saccharomyces cerevisiae (strain ATCC 204508 / S288c) (Baker's yeast)).